The primary structure comprises 161 residues: Cytochrome c-type biogenesis protein CcmE (161 aa).

At 1 to 8 (MNPRRKKR) the chain is on the cytoplasmic side. The chain crosses the membrane as a helical; Signal-anchor for type II membrane protein span at residues 9–29 (LTLAIALIGGVAAIASLLLYA). Over 30-161 (LNSNLNLFYT…DYSQQKSAAQ (132 aa)) the chain is Periplasmic. 2 residues coordinate heme: His-131 and Tyr-135. The segment at 138 to 161 (PEVAEAMGQKHEKLDYSQQKSAAQ) is disordered.

It belongs to the CcmE/CycJ family.

The protein localises to the cell inner membrane. In terms of biological role, heme chaperone required for the biogenesis of c-type cytochromes. Transiently binds heme delivered by CcmC and transfers the heme to apo-cytochromes in a process facilitated by CcmF and CcmH. This Shewanella sp. (strain MR-4) protein is Cytochrome c-type biogenesis protein CcmE.